Consider the following 459-residue polypeptide: Exodeoxyribonuclease 7 large subunit (459 aa).

Belongs to the XseA family. As to quaternary structure, heterooligomer composed of large and small subunits.

Its subcellular location is the cytoplasm. It carries out the reaction Exonucleolytic cleavage in either 5'- to 3'- or 3'- to 5'-direction to yield nucleoside 5'-phosphates.. Bidirectionally degrades single-stranded DNA into large acid-insoluble oligonucleotides, which are then degraded further into small acid-soluble oligonucleotides. This chain is Exodeoxyribonuclease 7 large subunit, found in Pseudomonas savastanoi pv. phaseolicola (strain 1448A / Race 6) (Pseudomonas syringae pv. phaseolicola (strain 1448A / Race 6)).